The following is a 912-amino-acid chain: Brevican core protein (912 aa).

The N-terminal stretch at 1-22 (MAPLFLPLLATLVLAWIPVALA) is a signal peptide. The Ig-like V-type domain maps to 36 to 155 (RVRIAGDAPL…SSDAVEVKVK (120 aa)). 5 disulfide bridges follow: Cys57-Cys137, Cys179-Cys250, Cys203-Cys224, Cys277-Cys352, and Cys301-Cys322. N-linked (GlcNAc...) asparagine glycosylation is present at Asn130. 2 consecutive Link domains span residues 157 to 252 (VVFL…YCYA) and 257 to 354 (GELF…YCFR). Residue Asn337 is glycosylated (N-linked (GlcNAc...) asparagine). Disordered regions lie at residues 408–427 (IPII…PAEA) and 438–651 (SIVP…SGDC). A Phosphoserine modification is found at Ser418. Ser418 is a glycosylation site (O-linked (Xyl...) (chondroitin sulfate) serine). A compositionally biased stretch (basic and acidic residues) spans 448–463 (EEGKVLEQEEKYRGEE). Positions 464–478 (EKEEEEEEEEVEDEA) are enriched in acidic residues. A compositionally biased stretch (pro residues) spans 520 to 537 (VSPPPYDEPEAPRPPRVL). The span at 603–617 (GDTRDLETPSEENSR) shows a compositional bias: basic and acidic residues. Residues 647–683 (SSGDCVPSPCHNGGTCLEEEEGVRCLCLPGYGGDLCD) enclose the EGF-like domain. 8 disulfides stabilise this stretch: Cys651/Cys662, Cys656/Cys671, Cys673/Cys682, Cys689/Cys700, Cys717/Cys809, Cys785/Cys801, Cys816/Cys859, and Cys845/Cys872. A C-type lectin domain is found at 683 to 811 (DVGLHFCSPG…NYHLSYTCKM (129 aa)). Residues 814–874 (VSCGPPPELP…WGLPQISCVP (61 aa)) form the Sushi domain.

The protein belongs to the aggrecan/versican proteoglycan family. As to quaternary structure, interacts with TNR. O-glycosylated; contains chondroitin sulfate. As to expression, brain; expressed in cerebellar astrocytes but not in neurons.

It is found in the secreted. The protein localises to the extracellular space. Its subcellular location is the extracellular matrix. May play a role in the terminally differentiating and the adult nervous system during postnatal development. Could stabilize interactions between hyaluronan (HA) and brain proteoglycans. This is Brevican core protein (BCAN) from Bos taurus (Bovine).